Reading from the N-terminus, the 1083-residue chain is Neisserial autotransporter lipoprotein NalP (1083 aa).

An N-terminal signal peptide occupies residues 1 to 27 (MRTTPTFPTKTFKPTAMALAVATTLSA). Cysteine 28 carries N-palmitoyl cysteine lipidation. Cysteine 28 carries the S-diacylglycerol cysteine lipid modification. A Peptidase S8 domain is found at 111–483 (NDAYKNLINL…WGLLDAGKAM (373 aa)). Catalysis depends on charge relay system residues aspartate 139, histidine 211, and serine 427. Positions 809-1083 (DGLDHNGTGL…SGRVGVGYRF (275 aa)) constitute an Autotransporter domain. Beta stranded transmembrane passes span 819-828 (RVIAQTQQDG), 844-852 (TQTVGIAAK), 858-866 (TAAATLGMG), 883-891 (SLFAGIRHD), 897-906 (YLKGLFSYGR), 931-941 (QLGALGGVNVP), 948-958 (LTVEGGLRYDL), 984-994 (VGLAGLKLSQP), 1000-1010 (VLFATAGVERD), 1041-1052 (RLVAGLGADVEF), 1057-1066 (NGLARYSYAG), and 1074-1083 (SGRVGVGYRF).

The protein belongs to the peptidase S8 family. In terms of processing, a fusion protein of the first 44 residues with beta-lactamase is lipidated in E.coli, strongly suggesting this is a lipoprotein in situ. The lipidated form is briefly retained on the cell surface which allows it to process its endogenous substrates on the cell surface before the passenger domain is released into the medium.

It is found in the cell outer membrane. Its subcellular location is the cell surface. The protein localises to the secreted. Functionally, major human immunogenic protein. Autotransporter with a secreted protease domain involved in processing other autotransporter proteins including App and IgA. Probably autoprocesses to release the about 70 kDa passenger domain. Processes the lactoferrin receptor lipoprotein subunit (LbpB) extracellularly, releasing it from the cell surface. LbpB release protects bacteria against complement-mediated killing by anti-LbpB antibodies. Processes NHBA. Lipidation slows its auto-processing, probably allowing it to act on endogenous substrates on the cell surface before the passenger domain is released into the medium. The C-terminal beta-barrel domain inserts into the outer membrane where it probably exports the N-terminal passenger domain. Both the cell surface protein (Neisserial autotransporter lipoprotein NalP) and the passenger domain cleave human (host) complement factor C3, generating a shorter alpha chain and a longer beta chain than normal. Its function is as follows. Plays a role in extracellular-DNA (eDNA) mediated biofilm formation. In some strains (including cc32 strain H44/76 but not cc11 strain B16B6) eDNA stimulates biofilm formation. When NalP is not expressed (and no longer processes NHBA or IgA) biofilm formation increases. This is probably because the number of positively charged, DNA-binding peptides on the cell surface rises, resulting in increased biofilm formation. In terms of biological role, cleaves human (host) complement factor C3, generating a shorter alpha chain and a longer beta chain than normal. Does not act on mouse or rabbit C3. Cleavage causes C3b degradation by human CFI and CFH, decreases deposition of C3b on the bacteria surface and probably facilitates complement escape. The protein is Neisserial autotransporter lipoprotein NalP of Neisseria meningitidis serogroup B / serotype 15 (strain H44/76).